We begin with the raw amino-acid sequence, 399 residues long: Putative glutamate--cysteine ligase 2 (399 aa).

The interval 377 to 399 (PAVGSSHGRTDPSRNGGPSHAGA) is disordered.

Belongs to the glutamate--cysteine ligase type 2 family. YbdK subfamily.

The catalysed reaction is L-cysteine + L-glutamate + ATP = gamma-L-glutamyl-L-cysteine + ADP + phosphate + H(+). ATP-dependent carboxylate-amine ligase which exhibits weak glutamate--cysteine ligase activity. This is Putative glutamate--cysteine ligase 2 from Thermobifida fusca (strain YX).